The following is a 254-amino-acid chain: Tryptophan synthase alpha chain (254 aa).

Catalysis depends on proton acceptor residues Glu48 and Asp59.

This sequence belongs to the TrpA family. As to quaternary structure, tetramer of two alpha and two beta chains.

The enzyme catalyses (1S,2R)-1-C-(indol-3-yl)glycerol 3-phosphate + L-serine = D-glyceraldehyde 3-phosphate + L-tryptophan + H2O. Its pathway is amino-acid biosynthesis; L-tryptophan biosynthesis; L-tryptophan from chorismate: step 5/5. Functionally, the alpha subunit is responsible for the aldol cleavage of indoleglycerol phosphate to indole and glyceraldehyde 3-phosphate. This Desulfotalea psychrophila (strain LSv54 / DSM 12343) protein is Tryptophan synthase alpha chain.